Reading from the N-terminus, the 134-residue chain is Profilin-3 (134 aa).

A disulfide bond links C13 and C118. Residues 84–100 carry the Involved in PIP2 interaction motif; that stretch reads AVIRGKKGSGGITIKKT. T114 is subject to Phosphothreonine.

It belongs to the profilin family. As to quaternary structure, occurs in many kinds of cells as a complex with monomeric actin in a 1:1 ratio. Post-translationally, phosphorylated by MAP kinases.

Its subcellular location is the cytoplasm. The protein localises to the cytoskeleton. Its function is as follows. Binds to actin and affects the structure of the cytoskeleton. At high concentrations, profilin prevents the polymerization of actin, whereas it enhances it at low concentrations. The chain is Profilin-3 from Olea europaea (Common olive).